Reading from the N-terminus, the 629-residue chain is Polyadenylate-binding protein 2 (629 aa).

A compositionally biased stretch (polar residues) spans 1–12 (MAQVQLQGQTPN). The disordered stretch occupies residues 1–25 (MAQVQLQGQTPNGSTAAVTSAPATS). Residues 13 to 25 (GSTAAVTSAPATS) are compositionally biased toward low complexity. 4 RRM domains span residues 36-114 (TSLY…YSHR), 124-201 (GNIF…PFLR), 215-292 (TNVY…RAQK), and 318-395 (SNLY…IAQR). Positions 480–507 (PQQQRPGGGRRPGGIQHSQQQNPMMQQQ) are disordered. Residues 492–507 (GGIQHSQQQNPMMQQQ) are compositionally biased toward low complexity. One can recognise a PABC domain in the interval 539-616 (TIGALASNLS…AMDVLRSVAA (78 aa)).

It belongs to the polyadenylate-binding protein type-1 family. Interacts with eIF-iso4G. Interacts with ERD15/CID1 and CID7. Interacts with Turnip mosaic virus (TuMV) VPg-Pro and RNA-dependent RNA polymerase (RdRp). In terms of tissue distribution, expressed in all organs (at the protein level) but under distinct spatial and temporal regulation within each organ.

It localises to the cytoplasm. The protein resides in the nucleus. In terms of biological role, binds the poly(A) tail of mRNA. Appears to be an important mediator of the multiple roles of the poly(A) tail in mRNA biogenesis, stability and translation. In the cytoplasm, affects both translation and mRNA decay. Stimulates translation by interaction with translation initiation factor eIF4G, a subunit of the cap-binding complex eIF4F, bringing the 5'- and 3'-ends of the mRNA in proximity. The formation of this circular mRNP structure appears to be critical for the synergistic effects of the cap and the poly(A) tail in facilitating translation initiation, recycling of ribosomes, and mRNA stability. During infection with potyvirus TuMV, acts as a potential integral component of the viral replicase complex that could play an important role in the regulation of potyviral RNA-dependent RNA polymerase (RdRp). Binds to uridylated mRNAs and determines the size of uridine extensions. Limits uridine extension by URT1, likely by binding to the oligo(A) tail and preventing URT1 access. In Arabidopsis thaliana (Mouse-ear cress), this protein is Polyadenylate-binding protein 2 (PAB2).